We begin with the raw amino-acid sequence, 312 residues long: uncharacterized protein (312 aa).

A run of 10 helical transmembrane segments spans residues 11 to 31, 46 to 66, 72 to 92, 98 to 118, 128 to 148, 155 to 171, 183 to 203, 221 to 241, 254 to 274, and 277 to 297; these read IAAI…KIAL, IAFA…SIRV, ILPL…FGLV, EAGI…AYVL, GFTV…GVDV, GSLL…MYNT, TELT…IALV, PGFV…TSFL, MSAF…VILN, and LAWY…GSNI. 2 consecutive EamA domains span residues 18–142 and 164–297; these read FIIG…FIFV and LSSA…GSNI.

The protein belongs to the EamA transporter family.

It is found in the cell membrane. This is an uncharacterized protein from Bacillus subtilis (strain 168).